The primary structure comprises 1074 residues: Fibrous sheath CABYR-binding protein (1074 aa).

Residues 1-73 are disordered; that stretch reads MEECEEPEEP…SKDNYSRKEY (73 aa). Phosphoserine occurs at positions 25, 57, 186, and 275. Disordered regions lie at residues 272–294 and 317–343; these read QAPS…KDVV and LVQG…SELP. A compositionally biased stretch (low complexity) spans 274-290; it reads PSPAEETSAAETATTTA. S365 carries the phosphoserine modification. Disordered stretches follow at residues 437–789 and 818–982; these read VSAD…PLES and GVPA…PLKT. Residues 448-467 are compositionally biased toward low complexity; the sequence is PPSAEDASEEVASSEVLPPS. Over residues 528 to 544 the composition is skewed to pro residues; sequence VLPPPAEEAPAEVPPPL. Positions 558–575 are enriched in low complexity; that stretch reads EEGPAEVPLAPAEEVPAE. Pro residues-rich tracts occupy residues 576–592 and 673–688; these read FLPP…PPPL and PLPP…PPPA. The span at 689–720 shows a compositional bias: low complexity; the sequence is TEEAPVEVLPPATEEAPVEVLPPATEEAPVEV. S1020 is subject to Phosphoserine. The disordered stretch occupies residues 1026–1054; the sequence is SEKELESTTLTSDKMSEGIDSVPEDVSGT.

As to quaternary structure, interacts with CABYR. Interacts with ROPN1 and ROPN1L; the interaction increases upon spermatozoa capacitation conditions. Phosphorylated by PKA upon spermatozoa capacitation conditions. In terms of tissue distribution, expression is restricted to testis and epididymis, expressed by spermatozoa.

Its subcellular location is the cell projection. The protein localises to the cilium. It localises to the flagellum. May be involved in the later stages of fibrous sheath biogenesis and spermatozoa capacitation. Inhibits ROPN1 and ROPN1L SUMOylation. Binds calcium. This chain is Fibrous sheath CABYR-binding protein, found in Mus musculus (Mouse).